Here is a 720-residue protein sequence, read N- to C-terminus: Serrate RNA effector molecule (720 aa).

3 disordered regions span residues 1–192 (MADV…NPQR), 288–335 (LNKS…FTSD), and 361–380 (ENVLQGSETEKSGREKLHSG). The segment covering 33–47 (SLPQQEQEQDQQQLP) has biased composition (low complexity). Residues 48 to 76 (LRRERDSRERRDERDIERPPPNRRERDRS) show a composition bias toward basic and acidic residues. Phosphoserine occurs at positions 76, 90, and 92. Positions 99–115 (DRRHSPPQRRSPPQKRY) are enriched in basic residues. Composition is skewed to basic and acidic residues over residues 116–126 (RRDDNGYDGRR) and 136–164 (PDRRFGYDHGGGYDREMGGRPGYGDERPH). Over residues 288–297 (LNKSGRTSEP) the composition is skewed to polar residues. The span at 368 to 378 (ETEKSGREKLH) shows a compositional bias: basic and acidic residues. The C2H2-type zinc-finger motif lies at 498–523 (YGCGAKGCTKLFHAAEFVYKHLKLKH). Disordered stretches follow at residues 543–622 (YMND…AFGG) and 666–687 (RDPSGPNPPFEGSGRGGPAPFL). Positions 570-607 (PSMENRLRDDRGGRRERDGRANGNDRNDRSEDQQRGDN) are enriched in basic and acidic residues. Gly residues predominate over residues 608–622 (DGGNPGEVGYDAFGG). Position 689 is a phosphoserine (Ser689).

The protein belongs to the ARS2 family. In terms of assembly, interacts with HYL1. Interacts with RCF3, RS40 and RS41. Expressed in shoot meristems and in emerging organ primordia throughout development.

The protein localises to the nucleus. The protein resides in the nucleus speckle. Functionally, acts as a mediator between the cap-binding complex (CBC) and both the pre-mRNA splicing and primary microRNAs (miRNAs) processing machinery. Required for proper processing of primary miRNAs to miRNAs, thereby playing a role in RNA-mediated gene silencing (RNAi) by miRNAs. Does not participate in sense post-transcriptional gene silencing. Acts as a regulator of meristem activity and adaxial leaf fate via the miRNA gene-silencing pathway by regulating the expression of PHB and by limiting the competence of shoot tissue to respond to KNOX expression. Its function is however not limited to miRNA-mediated repression of leaf polarity genes, but rather acts as a general regulator of primary microRNAs processing. Also critical for the accumulation of the trans-acting small interfering RNA (ta-siRNA). Required for pre-mRNA splicing. The polypeptide is Serrate RNA effector molecule (SE) (Arabidopsis thaliana (Mouse-ear cress)).